A 235-amino-acid chain; its full sequence is Large ribosomal subunit protein uL1 (235 aa).

Belongs to the universal ribosomal protein uL1 family. As to quaternary structure, part of the 50S ribosomal subunit.

Its function is as follows. Binds directly to 23S rRNA. The L1 stalk is quite mobile in the ribosome, and is involved in E site tRNA release. In terms of biological role, protein L1 is also a translational repressor protein, it controls the translation of the L11 operon by binding to its mRNA. This chain is Large ribosomal subunit protein uL1, found in Citrobacter koseri (strain ATCC BAA-895 / CDC 4225-83 / SGSC4696).